We begin with the raw amino-acid sequence, 1153 residues long: MFNQEQGTDYPVLNKKKLESLANLKLAMGGHEYPTDDLTQQGLKLAGPLLEEVEESEVNHTTAPIDARLQTFLNSYFAECGEEVPKIPDDTFILDREGLGRVLSFPPHKQEFFCETMKSYKIKQGVLHNPAKDKRTTVGVFHICQSDVPVPADKIECPKIAFLRMLKAAFYGAPDDHLIIPYTAECKEPTRSWVSLYMRPVVVPGVKGVKGFEHEKATEMHFFVPGNMVSCLDFVESVFGNAGNPRLSKNDAALDPLGWTGHSGMAILAPHLTRMTKKECGLPHISQATERQKRERMCWEKEDELYNDGKTFKMYCRDASGVICTIIADNYFGYCKKEVKTQISYSANLYGFAEEEHAGGAVTRPSYDLGEACKAVQYAEGYKFSEMVEKNKHSIIVKEEGYAVDKKYPEGIIYVPEDSVFTIEDASIKFNHNGKEESILLTPKVNYVLPNGYTIILHDTMTSRRWTLRGILPQYTLCHKPCTVSGGGKSEISKSIRDAVIEGSVFVNNKEEDFKAVQEIFDHDFSKRYANGEVKPIHILDPNVTLGTVVELLTPSHLFTKEHNDYISSISPLIVELVMTIKSLYREDWKGDWQSRITVDKINGNEGNELKYRGANLCSQYLRVGFERDETTWRVFQLRKDFFPAAKLQMEDDITASVIVPTKLLKTPINNMQKKACKIVKNCELRLFQRPDDAVFRGFDKQTEYDFSIPGHFISNYQPMTREEAKDFTKDVVRLYQYTEPMRKCLQDFVAGKDEAKYIVSSSYTRLVPEGDKLVGSKNPRYLQRRPDMLDPEYTYMTFKAIQLYRKISDEEPLYTPVDAVLSGRRNNPPQVAKNGMKLRPLSVFAPLHYFELPELLMECITSMTGASPSMFGAGSEGALTKGPFNSLPAVVDLNNYLLGMICCGYSGFVSSASYCGPHYKVAHDISLLIPEIWSKMRRYEQEPKYLIEHGYLEPCPDVTYNGKTYSGKRLGYRITTAFANHFLRTLFSMPNSVMPEDFLKPELQDLAIYADSYEYMSQTDKGIAMNYVKDGTVEGACPPLKALIYIMANGEYNGMTRESKEFREMFDPEVVLNSEWYKERLVTRQKLEVAKLNKDLAYLNKTIAEKPRLVETLNKQIAAVKEELQYVSSEEYLIDIDGSIGTDPYPYKCMKH.

The stretch at 1085-1131 (RQKLEVAKLNKDLAYLNKTIAEKPRLVETLNKQIAAVKEELQYVSSE) forms a coiled coil.

Belongs to the PPi-type phosphoenolpyruvate carboxykinase family. Monomer and trimer; forms heterotrimers with PEPCK1 and PEPCK3.

It is found in the cytoplasm. The protein localises to the cytosol. The enzyme catalyses oxaloacetate + diphosphate = phosphoenolpyruvate + phosphate + CO2. Inorganic pyrophosphate (PPi)-dependent phosphoenolpyruvate carboxykinase, which regulates the carbon flow of the central metabolism by fixing CO(2) to phosphoenolpyruvate to produce oxaloacetate. Can also produce pyruvate and diphosphate from phosphoenolpyruvate and phosphate. This chain is PPi-type phosphoenolpyruvate carboxykinase 2, found in Entamoeba histolytica (strain ATCC 30459 / HM-1:IMSS / ABRM).